The primary structure comprises 245 residues: Tyrosine recombinase XerD-like (245 aa).

Residues Met-1–Tyr-72 form the Core-binding (CB) domain. One can recognise a Tyr recombinase domain in the interval Pro-90–Asn-245. Catalysis depends on residues Lys-151 and Arg-210. Tyr-242 (O-(3'-phospho-DNA)-tyrosine intermediate) is an active-site residue.

The protein belongs to the 'phage' integrase family. XerD-like subfamily.

It is found in the cytoplasm. Putative tyrosine recombinase. Not involved in the cutting and rejoining of the recombining DNA molecules on dif(SL) site. The chain is Tyrosine recombinase XerD-like from Streptococcus mutans serotype c (strain ATCC 700610 / UA159).